Consider the following 1006-residue polypeptide: Probable sulfite reductase [NADPH] flavoprotein component (1006 aa).

The FAD-binding FR-type domain maps to 622 to 852 (EKVFTVHVRA…AVKTSVMKLP (231 aa)). Residues 658–669 (YDIGEALGVYGV) and 788–798 (IKRREYSISSS) contribute to the FAD site.

The cofactor is FAD. FMN serves as cofactor.

It carries out the reaction hydrogen sulfide + 3 NADP(+) + 3 H2O = sulfite + 3 NADPH + 4 H(+). It functions in the pathway sulfur metabolism; hydrogen sulfide biosynthesis; hydrogen sulfide from sulfite (NADPH route): step 1/1. In terms of biological role, this enzyme catalyzes the 6-electron reduction of sulfite to sulfide. This is one of several activities required for the biosynthesis of L-cysteine from sulfate. The chain is Probable sulfite reductase [NADPH] flavoprotein component from Schizosaccharomyces pombe (strain 972 / ATCC 24843) (Fission yeast).